Here is an 880-residue protein sequence, read N- to C-terminus: Vacuole morphology and inheritance protein 14 (880 aa).

HEAT repeat units follow at residues 82–119 (RYLRNILPPVLACFGDQNDQVRFYACESLYNIAKIAKG) and 243–280 (SYLPSFLGGLFTFLGDSHKDVRTVTHTLMDSLLHEVDR). Residues 333-373 (SKPLSMETDDTKLSNTNETDDERHLTSQEQLLDSEATSQEP) form a disordered region. Over residues 359–372 (SQEQLLDSEATSQE) the composition is skewed to polar residues. HEAT repeat units lie at residues 388–425 (LNFPEVITVLVNNLASSEAEIQLIALHWIQVILSISPN), 429–466 (PFLSKILSVLLKLLSDSDPHITEIAQLVNGQLLSLCSS), and 517–554 (KHNDSMFLTLLKSLSNRDSVLIEKALSLLQSLCSDSND). Residues Ser-767, Ser-805, and Ser-867 each carry the phosphoserine modification. A disordered region spans residues 850–880 (EMESPNDNSSVILKDSGSLPFNRNVSDKLKK).

This sequence belongs to the VAC14 family. Component of the PI(3,5)P2 regulatory complex, composed of ATG18, FIG4, FAB1, VAC14 and VAC7. VAC14 nucleates the assembly of the complex and serves as a scaffold.

Its subcellular location is the vacuole membrane. In terms of biological role, the PI(3,5)P2 regulatory complex regulates both the synthesis and turnover of phosphatidylinositol 3,5-bisphosphate (PtdIns(3,5)P2). Regulates the synthesis of PtdIns(3,5)P2 by positive activation of FAB1 and by controlling FIG4 localization. Required for FIG4-mediated turnover of PtdIns(3,5)P2 after hyperosmotic shock. Essential for the control of trafficking of some proteins to the vacuole lumen via the multivesicular body (MVB), and for maintenance of vacuole size and acidity. The polypeptide is Vacuole morphology and inheritance protein 14 (VAC14) (Saccharomyces cerevisiae (strain ATCC 204508 / S288c) (Baker's yeast)).